A 250-amino-acid chain; its full sequence is 23S rRNA (guanine(2535)-N(1))-methyltransferase (250 aa).

The enzyme catalyses guanosine(2535) in 23S rRNA + S-adenosyl-L-methionine = N(1)-methylguanosine(2535) in 23S rRNA + S-adenosyl-L-homocysteine + H(+). In terms of biological role, specifically methylates the guanine-2535 in 23S ribosomal RNA. Confers resistance to antibiotic avilamycin, an orthosomycin antibiotic. This chain is 23S rRNA (guanine(2535)-N(1))-methyltransferase (aviRa), found in Streptomyces viridochromogenes.